The following is a 247-amino-acid chain: tRNA (guanine-N(1)-)-methyltransferase (247 aa).

S-adenosyl-L-methionine is bound by residues Gly113 and 133–138 (IGDFVM).

It belongs to the RNA methyltransferase TrmD family. In terms of assembly, homodimer.

It localises to the cytoplasm. It carries out the reaction guanosine(37) in tRNA + S-adenosyl-L-methionine = N(1)-methylguanosine(37) in tRNA + S-adenosyl-L-homocysteine + H(+). Functionally, specifically methylates guanosine-37 in various tRNAs. This is tRNA (guanine-N(1)-)-methyltransferase from Vibrio campbellii (strain ATCC BAA-1116).